The sequence spans 117 residues: Fluoride-specific ion channel FluC 2 (117 aa).

4 helical membrane-spanning segments follow: residues 4–24 (FLIG…GDII), 31–51 (KFPW…GIIT), 59–79 (LSMI…TFMY), and 94–114 (LIYI…GEFI). Residues Gly-69 and Thr-72 each coordinate Na(+).

This sequence belongs to the fluoride channel Fluc/FEX (TC 1.A.43) family.

The protein resides in the cell membrane. The enzyme catalyses fluoride(in) = fluoride(out). With respect to regulation, na(+) is not transported, but it plays an essential structural role and its presence is essential for fluoride channel function. Fluoride-specific ion channel. Important for reducing fluoride concentration in the cell, thus reducing its toxicity. The sequence is that of Fluoride-specific ion channel FluC 2 from Clostridium acetobutylicum (strain ATCC 824 / DSM 792 / JCM 1419 / IAM 19013 / LMG 5710 / NBRC 13948 / NRRL B-527 / VKM B-1787 / 2291 / W).